The primary structure comprises 565 residues: Small ribosomal subunit protein bS1 (565 aa).

6 consecutive S1 motif domains span residues 30–96 (SSVI…LSRD), 114–180 (NEKV…VSRR), 201–269 (GQVI…LGMK), 286–356 (NARF…LGLK), 373–443 (GSTV…LGVK), and 454–529 (GDVK…VSIK).

It belongs to the bacterial ribosomal protein bS1 family. The initiator methionine may be removed.

Functionally, binds mRNA; thus facilitating recognition of the initiation point. It is needed to translate mRNA with a short Shine-Dalgarno (SD) purine-rich sequence. The sequence is that of Small ribosomal subunit protein bS1 (rpsA) from Rhodopseudomonas palustris (strain ATCC BAA-98 / CGA009).